Consider the following 452-residue polypeptide: AP-4 complex subunit mu-1 (452 aa).

The 268-residue stretch at 184-451 (KNEVFLDVVE…LSHSDAYVIR (268 aa)) folds into the MHD domain.

It belongs to the adaptor complexes medium subunit family. In terms of assembly, adaptor protein complex 4 (AP-4) is a heterotetramer composed of two large adaptins (epsilon-type subunit AP4E1 and beta-type subunit AP4B1), a medium adaptin (mu-type subunit AP4M1) and a small adaptin (sigma-type AP4S1). Interacts with tyrosine-based sorting signals on the cytoplasmic tail of cargo proteins such as APP, ATG9A, LAMP2 and NAGPA. Interacts with the C-terminal domain of GRID2. Interacts with GRIA1 and GRIA2; the interaction is indirect via CACNG3. Interacts with CACNG3; CACNG3 associates GRIA1 and GRIA2 with the adaptor protein complex 4 (AP-4) to target them to the somatodendritic compartment of neurons. Interacts with HOOK1 and HOOK2; the interactions are direct, mediate the interaction between FTS-Hook-FHIP (FHF) complex and AP-4 and the perinuclear distribution of AP-4.

The protein localises to the golgi apparatus. It is found in the trans-Golgi network membrane. The protein resides in the early endosome. In terms of biological role, component of the adaptor protein complex 4 (AP-4). Adaptor protein complexes are vesicle coat components involved both in vesicle formation and cargo selection. They control the vesicular transport of proteins in different trafficking pathways. AP-4 forms a non clathrin-associated coat on vesicles departing the trans-Golgi network (TGN) and may be involved in the targeting of proteins from the trans-Golgi network (TGN) to the endosomal-lysosomal system. It is also involved in protein sorting to the basolateral membrane in epithelial cells and the proper asymmetric localization of somatodendritic proteins in neurons. Within AP-4, the mu-type subunit AP4M1 is directly involved in the recognition and binding of tyrosine-based sorting signals found in the cytoplasmic part of cargos. The adaptor protein complex 4 (AP-4) may also recognize other types of sorting signal. This Bos taurus (Bovine) protein is AP-4 complex subunit mu-1.